The primary structure comprises 121 residues: Prefoldin subunit beta (121 aa).

This sequence belongs to the prefoldin subunit beta family. Heterohexamer of two alpha and four beta subunits.

Its subcellular location is the cytoplasm. Functionally, molecular chaperone capable of stabilizing a range of proteins. Seems to fulfill an ATP-independent, HSP70-like function in archaeal de novo protein folding. The polypeptide is Prefoldin subunit beta (Methanoculleus marisnigri (strain ATCC 35101 / DSM 1498 / JR1)).